The primary structure comprises 230 residues: uncharacterized protein (230 aa).

An HTH gntR-type domain is found at 12-80 (KNLSYVLAEK…PRIGTRVMPQ (69 aa)). A DNA-binding region (H-T-H motif) is located at residues 40 to 59 (EIELGEQFGVSRTAVREAVK).

This is an uncharacterized protein from Escherichia coli (strain K12).